Consider the following 403-residue polypeptide: Flavohemoprotein (403 aa).

Residues methionine 1–serine 138 enclose the Globin domain. Histidine 85 contacts heme b. Catalysis depends on charge relay system residues tyrosine 95 and glutamate 137. The tract at residues glycine 149–glutamate 403 is reductase. Positions alanine 152–aspartate 262 constitute an FAD-binding FR-type domain. Residues tyrosine 190 and arginine 206 to serine 209 each bind FAD. Glycine 275–proline 280 provides a ligand contact to NADP(+). Valine 395–proline 398 serves as a coordination point for FAD.

This sequence belongs to the globin family. Two-domain flavohemoproteins subfamily. The protein in the C-terminal section; belongs to the flavoprotein pyridine nucleotide cytochrome reductase family. The cofactor is heme b. Requires FAD as cofactor.

It carries out the reaction 2 nitric oxide + NADPH + 2 O2 = 2 nitrate + NADP(+) + H(+). The catalysed reaction is 2 nitric oxide + NADH + 2 O2 = 2 nitrate + NAD(+) + H(+). Its function is as follows. Is involved in NO detoxification in an aerobic process, termed nitric oxide dioxygenase (NOD) reaction that utilizes O(2) and NAD(P)H to convert NO to nitrate, which protects the bacterium from various noxious nitrogen compounds. Therefore, plays a central role in the inducible response to nitrosative stress. This is Flavohemoprotein from Rhizobium meliloti (strain 1021) (Ensifer meliloti).